The sequence spans 196 residues: MVVAQAGAPAHPPAAHGAEAGHGEAAGGEHGGFPPFKPQHFASQLIWLIVSFGALYFLMSRVTLPRIGRILEERHDRIAKDLEEARLRQAESEAAQAAYEKALTEARGKANAIAGEARARLAAETDANRKSLEENLNAKLADAERRIASTKATALSHVRGIAVDTTGAIVTALVGTPAGNQDVESAVDAALAAKSA.

Over residues 1–18 the composition is skewed to low complexity; the sequence is MVVAQAGAPAHPPAAHGA. Positions 1–33 are disordered; the sequence is MVVAQAGAPAHPPAAHGAEAGHGEAAGGEHGGF. The helical transmembrane segment at 41 to 60 threads the bilayer; sequence FASQLIWLIVSFGALYFLMS.

The protein belongs to the ATPase B chain family. F-type ATPases have 2 components, F(1) - the catalytic core - and F(0) - the membrane proton channel. F(1) has five subunits: alpha(3), beta(3), gamma(1), delta(1), epsilon(1). F(0) has three main subunits: a(1), b(2) and c(10-14). The alpha and beta chains form an alternating ring which encloses part of the gamma chain. F(1) is attached to F(0) by a central stalk formed by the gamma and epsilon chains, while a peripheral stalk is formed by the delta and b chains.

The protein resides in the cell inner membrane. Its function is as follows. F(1)F(0) ATP synthase produces ATP from ADP in the presence of a proton or sodium gradient. F-type ATPases consist of two structural domains, F(1) containing the extramembraneous catalytic core and F(0) containing the membrane proton channel, linked together by a central stalk and a peripheral stalk. During catalysis, ATP synthesis in the catalytic domain of F(1) is coupled via a rotary mechanism of the central stalk subunits to proton translocation. Functionally, component of the F(0) channel, it forms part of the peripheral stalk, linking F(1) to F(0). The b'-subunit is a diverged and duplicated form of b found in plants and photosynthetic bacteria. In Azorhizobium caulinodans (strain ATCC 43989 / DSM 5975 / JCM 20966 / LMG 6465 / NBRC 14845 / NCIMB 13405 / ORS 571), this protein is ATP synthase subunit b 2 (atpF2).